A 447-amino-acid chain; its full sequence is NADH-ubiquinone oxidoreductase chain 4 (447 aa).

The next 13 helical transmembrane spans lie at 28-48, 56-76, 89-109, 110-130, 141-161, 183-203, 213-233, 246-266, 273-293, 298-318, 331-351, 374-394, and 409-431; these read IFLL…FNYI, MVSY…LMAS, FVFM…SMSV, FMFY…ILGW, VYLL…IFYI, LLYL…LVHL, PVSG…YGLL, YNYW…LVCL, ALIA…LLTM, LTGS…LFCL, LLIN…WFLL, IVSW…FSAA, and YSGV…LHWL.

This sequence belongs to the complex I subunit 4 family.

The protein resides in the mitochondrion membrane. It carries out the reaction a ubiquinone + NADH + 5 H(+)(in) = a ubiquinol + NAD(+) + 4 H(+)(out). Core subunit of the mitochondrial membrane respiratory chain NADH dehydrogenase (Complex I) that is believed to belong to the minimal assembly required for catalysis. Complex I functions in the transfer of electrons from NADH to the respiratory chain. The immediate electron acceptor for the enzyme is believed to be ubiquinone. The protein is NADH-ubiquinone oxidoreductase chain 4 (mt:ND4) of Anopheles gambiae (African malaria mosquito).